The primary structure comprises 284 residues: Polyamine aminopropyltransferase (284 aa).

One can recognise a PABS domain in the interval E4–H238. Q33 is an S-methyl-5'-thioadenosine binding site. Positions 64 and 88 each coordinate spermidine. S-methyl-5'-thioadenosine contacts are provided by residues E108 and D140–G141. Residue D158 is the Proton acceptor of the active site. D158 to D161 lines the spermidine pocket. P165 lines the S-methyl-5'-thioadenosine pocket.

The protein belongs to the spermidine/spermine synthase family. As to quaternary structure, homodimer or homotetramer.

It is found in the cytoplasm. It carries out the reaction S-adenosyl 3-(methylsulfanyl)propylamine + putrescine = S-methyl-5'-thioadenosine + spermidine + H(+). It functions in the pathway amine and polyamine biosynthesis; spermidine biosynthesis; spermidine from putrescine: step 1/1. Catalyzes the irreversible transfer of a propylamine group from the amino donor S-adenosylmethioninamine (decarboxy-AdoMet) to putrescine (1,4-diaminobutane) to yield spermidine. The polypeptide is Polyamine aminopropyltransferase (Ruegeria sp. (strain TM1040) (Silicibacter sp.)).